A 211-amino-acid polypeptide reads, in one-letter code: Interleukin-6 (211 aa).

An N-terminal signal peptide occupies residues 1 to 24 (MKFLSARDFQPVAFLGLMLLTATA). An intrachain disulfide couples C70 to C76. S79 carries the post-translational modification Phosphoserine. A disulfide bridge links C99 with C109.

The protein belongs to the IL-6 superfamily. In terms of assembly, component of a hexamer of two molecules each of IL6, IL6R and IL6ST; first binds to IL6R to associate with the signaling subunit IL6ST. Interacts with IL6R (via the N-terminal ectodomain); this interaction may be affected by IL6R-binding with SORL1, hence decreasing IL6 cis signaling. Interacts with SORL1 (via the N-terminal ectodomain); this interaction leads to IL6 internalization and lysosomal degradation. May form a trimeric complex with the soluble SORL1 ectodomain and soluble IL6R receptor; this interaction might stabilize circulating IL6, hence promoting IL6 trans signaling.

It is found in the secreted. In terms of biological role, cytokine with a wide variety of biological functions in immunity, tissue regeneration, and metabolism. Binds to IL6R, then the complex associates to the signaling subunit IL6ST/gp130 to trigger the intracellular IL6-signaling pathway. The interaction with the membrane-bound IL6R and IL6ST stimulates 'classic signaling', whereas the binding of IL6 and soluble IL6R to IL6ST stimulates 'trans-signaling'. Alternatively, 'cluster signaling' occurs when membrane-bound IL6:IL6R complexes on transmitter cells activate IL6ST receptors on neighboring receiver cells. Functionally, IL6 is a potent inducer of the acute phase response. Rapid production of IL6 contributes to host defense during infection and tissue injury, but excessive IL6 synthesis is involved in disease pathology. In the innate immune response, is synthesized by myeloid cells, such as macrophages and dendritic cells, upon recognition of pathogens through toll-like receptors (TLRs) at the site of infection or tissue injury. In the adaptive immune response, is required for the differentiation of B-cells into immunoglolin-secreting cells. Plays a major role in the differentiation of CD4(+) T cell subsets. Essential factor for the development of T follicular helper (Tfh) cells that are required for the induction of germinal-center formation. Together with IL21, controls the early generation of Tfh cells and are critical for an effective antibody response to acute viral infection. Required to drive naive CD4(+) T cells to the Th17 lineage, through 'cluster signaling' by dendritic cells. Also required for proliferation of myeloma cells and the survival of plasmablast cells. Its function is as follows. Acts as an essential factor in bone homeostasis and on vessels directly or indirectly by induction of VEGF, resulting in increased angiogenesis activity and vascular permeability. Induces, through 'trans-signaling' and synergistically with IL1B and TNF, the production of VEGF. Involved in metabolic controls, is discharged into the bloodstream after muscle contraction increasing lipolysis and improving insulin resistance. 'Trans-signaling' in central nervous system regulates energy and glucose homeostasis. Mediates, through GLP-1, crosstalk between insulin-sensitive tissues, intestinal L cells and pancreatic islets to adapt to changes in insulin demand. Also acts as a myokine. Plays a protective role during liver injury, being required for maintenance of tissue regeneration. Also has a pivotal role in iron metabolism by regulating HAMP/hepcidin expression upon inflammation or bacterial infection. Through activation of IL6ST-YAP-NOTCH pathway, induces inflammation-induced epithelial regeneration. In Rattus norvegicus (Rat), this protein is Interleukin-6.